Reading from the N-terminus, the 240-residue chain is 3-deoxy-D-manno-octulosonic acid kinase (240 aa).

Residue D170 is part of the active site.

It belongs to the protein kinase superfamily. KdkA/RfaP family.

It is found in the cell inner membrane. It catalyses the reaction an alpha-Kdo-(2-&gt;6)-lipid IVA + ATP = a 4-O-phospho-alpha-Kdo-(2-&gt;6)-lipid IVA + ADP + H(+). Its pathway is bacterial outer membrane biogenesis; LPS core biosynthesis. Its function is as follows. Catalyzes the ATP-dependent phosphorylation of the 3-deoxy-D-manno-octulosonic acid (Kdo) residue in Kdo-lipid IV(A) at the 4-OH position. The sequence is that of 3-deoxy-D-manno-octulosonic acid kinase from Mannheimia succiniciproducens (strain KCTC 0769BP / MBEL55E).